Reading from the N-terminus, the 501-residue chain is Probable cytosol aminopeptidase (501 aa).

2 residues coordinate Mn(2+): Lys-268 and Asp-273. Lys-280 is a catalytic residue. Mn(2+) contacts are provided by Asp-291, Asp-350, and Glu-352. The active site involves Arg-354.

It belongs to the peptidase M17 family. Mn(2+) is required as a cofactor.

It localises to the cytoplasm. It carries out the reaction Release of an N-terminal amino acid, Xaa-|-Yaa-, in which Xaa is preferably Leu, but may be other amino acids including Pro although not Arg or Lys, and Yaa may be Pro. Amino acid amides and methyl esters are also readily hydrolyzed, but rates on arylamides are exceedingly low.. The enzyme catalyses Release of an N-terminal amino acid, preferentially leucine, but not glutamic or aspartic acids.. Its function is as follows. Presumably involved in the processing and regular turnover of intracellular proteins. Catalyzes the removal of unsubstituted N-terminal amino acids from various peptides. In Nitrosococcus oceani (strain ATCC 19707 / BCRC 17464 / JCM 30415 / NCIMB 11848 / C-107), this protein is Probable cytosol aminopeptidase.